A 629-amino-acid chain; its full sequence is tRNA uridine 5-carboxymethylaminomethyl modification enzyme MnmG (629 aa).

13-18 (GGGHAG) is a binding site for FAD. 273–287 (GPRYCPSIEDKIMRF) is a binding site for NAD(+).

This sequence belongs to the MnmG family. In terms of assembly, homodimer. Heterotetramer of two MnmE and two MnmG subunits. FAD serves as cofactor.

It is found in the cytoplasm. NAD-binding protein involved in the addition of a carboxymethylaminomethyl (cmnm) group at the wobble position (U34) of certain tRNAs, forming tRNA-cmnm(5)s(2)U34. The polypeptide is tRNA uridine 5-carboxymethylaminomethyl modification enzyme MnmG (Tolumonas auensis (strain DSM 9187 / NBRC 110442 / TA 4)).